The following is a 99-amino-acid chain: Small ribosomal subunit protein uS17 (99 aa).

Belongs to the universal ribosomal protein uS17 family. Part of the 30S ribosomal subunit.

One of the primary rRNA binding proteins, it binds specifically to the 5'-end of 16S ribosomal RNA. This Thermosipho africanus (strain TCF52B) protein is Small ribosomal subunit protein uS17.